Consider the following 392-residue polypeptide: MKKKILASLLLSTVMVSQVAVLTTAHAETTDDKIAAQDNKISNLTAQQQEAQKQVDQIQEQVSAIQAEQSNLQAENDRLQAESKKLEGEITELSKNIVSRNQSLEKQARSAQTNGAVTSYINTIVNSKSITEAISRVAAMSEIVSANNKMLEQQKADKKAISEKQVANNDAINTVIANQQKLADDAQALTTKQAELKAAELSLAAEKATAEGEKASLLEQKAAAEAEARAAAVAEAAYKEKRASQQQSVLASANTNLTAQVQAVSESAAAPVRAKVRPTYSTNASSYPIGECTWGVKTLAPWAGDYWGNGAQWATSAAAAGFRTGSTPQVGAIACWNDGGYGHVAVVTAVESTTRIQVSESNYAGNRTIGNHRGWFNPTTTSEGFVTYIYAD.

The signal sequence occupies residues 1–27 (MKKKILASLLLSTVMVSQVAVLTTAHA). Coiled-coil stretches lie at residues 34-96 (IAAQ…LSKN) and 191-227 (TKQA…AEAE). Residues 47 to 267 (QQQEAQKQVD…TAQVQAVSES (221 aa)) form an interacts with large extracellular loop of FtsX region. Residues 267–390 (SAAAPVRAKV…TSEGFVTYIY (124 aa)) form the Peptidase C51 domain.

In terms of assembly, homodimer. Interacts (via N-terminal coiled coil domain) with FtsX (via large extracellular loop). This interaction directs PcsB to equatorial and septal sites of dividing cells. Interacts with FtsE.

It is found in the cell membrane. Its subcellular location is the cell septum. The protein localises to the secreted. Its activity is regulated as follows. Lacks peptidoglycan-hydrolase activity in vitro, probably due to auto-inhibition by the CC domain. In the homodimer, interaction between the CC domain in one monomer and the hydrolase active site in the peptidase C51/CHAP domain in the other monomer probably mediates auto-inhibition of the hydrolase activity. In terms of biological role, peptidoglycan-hydrolase activity. Required in maintaining normal growth and cellular morphology. Involved in splitting of the septum during cell division. The polypeptide is Peptidoglycan hydrolase PcsB (Streptococcus pneumoniae serotype 2 (strain D39 / NCTC 7466)).